We begin with the raw amino-acid sequence, 226 residues long: Large ribosomal subunit protein uL3 (226 aa).

Positions 135 to 150 (MSSQRASHGNSRSHNV) are enriched in polar residues. A disordered region spans residues 135–158 (MSSQRASHGNSRSHNVPGSIGMAQ). Position 158 is an N5-methylglutamine (glutamine 158).

It belongs to the universal ribosomal protein uL3 family. In terms of assembly, part of the 50S ribosomal subunit. Forms a cluster with proteins L14 and L19. Post-translationally, methylated by PrmB.

Functionally, one of the primary rRNA binding proteins, it binds directly near the 3'-end of the 23S rRNA, where it nucleates assembly of the 50S subunit. This is Large ribosomal subunit protein uL3 from Variovorax paradoxus (strain S110).